The sequence spans 1041 residues: Integrator complex subunit 3 (1041 aa).

At Met-1 the chain carries N-acetylmethionine. Phosphoserine is present on residues Ser-500, Ser-535, and Ser-993. The interval 975–1041 is disordered; it reads YEDSSTKPPK…GSSAVGSDSD (67 aa). Residues 1006–1020 are compositionally biased toward acidic residues; that stretch reads AEEESGSSSASEEED.

This sequence belongs to the Integrator subunit 3 family. In terms of assembly, component of the Integrator complex, composed of core subunits INTS1, INTS2, INTS3, INTS4, INTS5, INTS6, INTS7, INTS8, INTS9/RC74, INTS10, INTS11/CPSF3L, INTS12, INTS13, INTS14 and INTS15. The core complex associates with protein phosphatase 2A subunits PPP2CA and PPP2R1A, to form the Integrator-PP2A (INTAC) complex. Component of the SOSS complex, composed of SOSS-B (SOSS-B1/NABP2 or SOSS-B2/NABP1), SOSS-A/INTS3 and SOSS-C/INIP. SOSS complexes containing SOSS-B1/NABP2 are more abundant than complexes containing SOSS-B2/NABP1. Interacts with SOSS-B1/NABP2, SOSS-B2/NABP1 and SOSS-C/INIP; the interaction is direct. Interacts with NBN/NBS1.

The protein resides in the nucleus. Its subcellular location is the cytoplasm. Component of the integrator complex, a multiprotein complex that terminates RNA polymerase II (Pol II) transcription in the promoter-proximal region of genes. The integrator complex provides a quality checkpoint during transcription elongation by driving premature transcription termination of transcripts that are unfavorably configured for transcriptional elongation: the complex terminates transcription by (1) catalyzing dephosphorylation of the C-terminal domain (CTD) of Pol II subunit POLR2A/RPB1 and SUPT5H/SPT5, (2) degrading the exiting nascent RNA transcript via endonuclease activity and (3) promoting the release of Pol II from bound DNA. The integrator complex is also involved in terminating the synthesis of non-coding Pol II transcripts, such as enhancer RNAs (eRNAs), small nuclear RNAs (snRNAs), telomerase RNAs and long non-coding RNAs (lncRNAs). Within the integrator complex, INTS3 is involved in the post-termination step: INTS3 binds INTS7 in the open conformation of integrator complex and prevents the rebinding of Pol II to the integrator after termination cycle. Mediates recruitment of cytoplasmic dynein to the nuclear envelope, probably as component of the integrator complex. Functionally, component of the SOSS complex, a multiprotein complex that functions downstream of the MRN complex to promote DNA repair and G2/M checkpoint. The SOSS complex associates with single-stranded DNA at DNA lesions and influences diverse endpoints in the cellular DNA damage response including cell-cycle checkpoint activation, recombinational repair and maintenance of genomic stability. The SOSS complex is required for efficient homologous recombination-dependent repair of double-strand breaks (DSBs) and ATM-dependent signaling pathways. In the SOSS complex, it is required for the assembly of the complex and for stabilization of the complex at DNA damage sites. The protein is Integrator complex subunit 3 (Ints3) of Mus musculus (Mouse).